Reading from the N-terminus, the 127-residue chain is Riboflavin kinase (127 aa).

Gly10 to Arg15 provides a ligand contact to CDP. Positions 39 and 41 each coordinate Mg(2+). Thr96 and Glu104 together coordinate FMN. Val109 to Arg112 provides a ligand contact to CDP.

The protein belongs to the archaeal riboflavin kinase family. Mg(2+) is required as a cofactor.

It carries out the reaction riboflavin + CTP = CDP + FMN + H(+). It functions in the pathway cofactor biosynthesis; FMN biosynthesis; FMN from riboflavin (CTP route): step 1/1. Catalyzes the CTP-dependent phosphorylation of riboflavin (vitamin B2) to form flavin mononucleotide (FMN). This is Riboflavin kinase from Methanococcus maripaludis (strain C7 / ATCC BAA-1331).